Reading from the N-terminus, the 209-residue chain is Bcl-2 homologous antagonist/killer (209 aa).

The tract at residues 1–28 (MASGQGPGPPKVGCDESPSPSEQQVAQD) is disordered. A2 is subject to N-acetylalanine. Positions 18 to 27 (PSPSEQQVAQ) are enriched in polar residues. Residues 72 to 86 (VGRQLALIGDDINRR) carry the BH3 motif. The short motif at 115-134 (SLFKSGISWGRVVALLGFGY) is the BH1 element. Residues D158 and H162 each coordinate Zn(2+). Positions 167 to 182 (RWIAQRGGWVAALNFR) match the BH2 motif. A helical transmembrane segment spans residues 186–203 (ILTVMVIFGVVLLGQFVV).

Belongs to the Bcl-2 family. In terms of assembly, homodimer. Formation of the homodimer is zinc-dependent. Forms heterodimers with BCL2 and BCL2L1 isoform Bcl-X(L). Forms heterooligomers with BAX. Interacts with BCL2A1. Interacts withRTL10/BOP. Interacts with VDAC1. Interacts with GIMAP3/IAN4 and GIMAP5/IAN5. As to quaternary structure, (Microbial infection) Interacts with gamma-herpesvirus 68 protein vBCL2. In terms of tissue distribution, widely expressed.

It is found in the mitochondrion outer membrane. Functionally, in the presence of an appropriate stimulus, accelerates programmed cell death by binding to, and antagonizing the anti-apoptotic action of BCL2. The protein is Bcl-2 homologous antagonist/killer (Bak1) of Mus musculus (Mouse).